Reading from the N-terminus, the 273-residue chain is Tyrosinase (273 aa).

Cu cation is bound by residues His37, His53, His62, His189, His193, and His215.

This sequence belongs to the tyrosinase family. Cu(2+) serves as cofactor.

The catalysed reaction is 2 L-dopa + O2 = 2 L-dopaquinone + 2 H2O. It catalyses the reaction L-tyrosine + O2 = L-dopaquinone + H2O. In terms of biological role, this is a copper-containing oxidase that functions in the formation of pigments such as melanins and other polyphenolic compounds. This is Tyrosinase (melC2) from Streptomyces lincolnensis.